The primary structure comprises 446 residues: uncharacterized protein (446 aa).

The next 12 membrane-spanning stretches (helical) occupy residues 20–40 (LIGVGCTIGTGFFLGSSIAIV), 42–62 (SGFSVLLSFLIAGIGTYFVFE), 95–115 (WVYWTSEMLITGSQLTAISLF), 127–147 (VFASIYAVLGLLIIFTGLSVF), 160–180 (AAIFMFIVIAILALCGILSGG), 205–225 (LIYAFYAFGGIEVMGLMAVHL), 237–257 (LMLATLAIIYIISIGLALLLV), 284–304 (IFNGIFIIAGFSTLVASLFAV), 331–351 (WPALGLTFAGLVLSIILSLVL), 355–375 (IYEHMTTAAGLMLLYTWLFIL), 388–408 (GKTQIYLAMVLIAAAVSGTLF), and 414–434 (PGFFVSIGFLVIIAIVTMIYQ).

Belongs to the amino acid-polyamine-organocation (APC) superfamily.

The protein resides in the cell membrane. This is an uncharacterized protein from Bacillus subtilis (strain 168).